The sequence spans 833 residues: Leucine--tRNA ligase (833 aa).

The short motif at 41–52 (PYPSGAGLHVGH) is the 'HIGH' region element. The short motif at 610 to 614 (KMSKS) is the 'KMSKS' region element. Lys-613 serves as a coordination point for ATP.

This sequence belongs to the class-I aminoacyl-tRNA synthetase family.

The protein localises to the cytoplasm. The catalysed reaction is tRNA(Leu) + L-leucine + ATP = L-leucyl-tRNA(Leu) + AMP + diphosphate. This is Leucine--tRNA ligase from Streptococcus pneumoniae (strain ATCC 700669 / Spain 23F-1).